A 488-amino-acid chain; its full sequence is Fumarate hydratase, mitochondrial (488 aa).

The transit peptide at 1–24 (MLRFTNCSCKTFVKSSYKLNIRRM) directs the protein to the mitochondrion. Substrate contacts are provided by residues 124–126 (SGT), 154–157 (HPNN), 164–166 (SSN), and T212. H213 serves as the catalytic Proton donor/acceptor. The active site involves S343. Substrate-binding positions include S344 and 349–351 (KVN). T428 carries the post-translational modification Phosphothreonine.

Belongs to the class-II fumarase/aspartase family. Fumarase subfamily. In terms of assembly, homotetramer.

The protein resides in the mitochondrion matrix. It is found in the cytoplasm. Its subcellular location is the nucleus. It carries out the reaction (S)-malate = fumarate + H2O. It participates in carbohydrate metabolism; tricarboxylic acid cycle; (S)-malate from fumarate: step 1/1. Functionally, catalyzes the reversible stereospecific interconversion of fumarate to L-malate. In mitochondrion, catalyzes the hydration of fumarate to L-malate in the tricarboxylic acid (TCA) cycle to facilitate a transition step in the production of energy in the form of NADH. In cytoplasm and nucleus, involved in DNA repair in response to DNA damage: following DNA double-strand breaks (DSBs), translocates from the cytosol to the nucleus and promotes DNA repair by catalyzing the dehydration of L-malate to fumarate. In Saccharomyces cerevisiae (strain ATCC 204508 / S288c) (Baker's yeast), this protein is Fumarate hydratase, mitochondrial.